A 323-amino-acid polypeptide reads, in one-letter code: GTP 3',8-cyclase (323 aa).

The Radical SAM core domain occupies 5–228 (GFGRKVDYLR…TVLRDTSSPA (224 aa)). Arg-14 contacts GTP. Cys-21 and Cys-25 together coordinate [4Fe-4S] cluster. S-adenosyl-L-methionine is bound at residue Tyr-27. Residue Cys-28 participates in [4Fe-4S] cluster binding. Arg-64 is a GTP binding site. Gly-68 serves as a coordination point for S-adenosyl-L-methionine. Thr-95 contacts GTP. S-adenosyl-L-methionine is bound at residue Ser-119. Position 155 (Lys-155) interacts with GTP. An S-adenosyl-L-methionine-binding site is contributed by Met-189. [4Fe-4S] cluster is bound by residues Cys-250 and Cys-253. Residue 255–257 (RIR) participates in GTP binding. Position 267 (Cys-267) interacts with [4Fe-4S] cluster. Residues 302–313 (KNKWSQKDDNEV) show a composition bias toward basic and acidic residues. A disordered region spans residues 302–323 (KNKWSQKDDNEVSTRAFYQTGG).

The protein belongs to the radical SAM superfamily. MoaA family. In terms of assembly, monomer and homodimer. [4Fe-4S] cluster is required as a cofactor.

The enzyme catalyses GTP + AH2 + S-adenosyl-L-methionine = (8S)-3',8-cyclo-7,8-dihydroguanosine 5'-triphosphate + 5'-deoxyadenosine + L-methionine + A + H(+). Its pathway is cofactor biosynthesis; molybdopterin biosynthesis. Its function is as follows. Catalyzes the cyclization of GTP to (8S)-3',8-cyclo-7,8-dihydroguanosine 5'-triphosphate. The sequence is that of GTP 3',8-cyclase from Aliarcobacter butzleri (strain RM4018) (Arcobacter butzleri).